The following is a 122-amino-acid chain: MVLELSKLNVADNSGAKEVGVIRVLGGSRKKTANIGDVIICSVKKAIPTGIVKEGQVVKAVIVRSVYGIHRENGQHIRFDDNAVVIIKDDKTPRGTRVFGPVARELRDKGYLKIVSLAPEVL.

The protein belongs to the universal ribosomal protein uL14 family. Part of the 50S ribosomal subunit. Forms a cluster with proteins L3 and L19. In the 70S ribosome, L14 and L19 interact and together make contacts with the 16S rRNA in bridges B5 and B8.

Its function is as follows. Binds to 23S rRNA. Forms part of two intersubunit bridges in the 70S ribosome. The polypeptide is Large ribosomal subunit protein uL14 (Mycoplasmopsis agalactiae (strain NCTC 10123 / CIP 59.7 / PG2) (Mycoplasma agalactiae)).